Consider the following 215-residue polypeptide: Probable phosphoglycerate mutase GpmB (215 aa).

Substrate contacts are provided by residues 8–15, 21–22, R58, R60, 82–85, 104–105, and 151–152; these read RHGETQWN, QG, ELNM, RR, and GI. H9 acts as the Tele-phosphohistidine intermediate in catalysis. The active-site Proton donor/acceptor is E82.

The protein belongs to the phosphoglycerate mutase family. GpmB subfamily.

The enzyme catalyses (2R)-2-phosphoglycerate = (2R)-3-phosphoglycerate. It participates in carbohydrate degradation; glycolysis; pyruvate from D-glyceraldehyde 3-phosphate: step 3/5. The sequence is that of Probable phosphoglycerate mutase GpmB from Escherichia coli O1:K1 / APEC.